Consider the following 288-residue polypeptide: 4-diphosphocytidyl-2-C-methyl-D-erythritol kinase (288 aa).

Residue Lys11 is part of the active site. An ATP-binding site is contributed by 100-110; that stretch reads PIAAGLGSGSS. Asp140 is a catalytic residue.

Belongs to the GHMP kinase family. IspE subfamily.

The catalysed reaction is 4-CDP-2-C-methyl-D-erythritol + ATP = 4-CDP-2-C-methyl-D-erythritol 2-phosphate + ADP + H(+). It participates in isoprenoid biosynthesis; isopentenyl diphosphate biosynthesis via DXP pathway; isopentenyl diphosphate from 1-deoxy-D-xylulose 5-phosphate: step 3/6. Its function is as follows. Catalyzes the phosphorylation of the position 2 hydroxy group of 4-diphosphocytidyl-2C-methyl-D-erythritol. The chain is 4-diphosphocytidyl-2-C-methyl-D-erythritol kinase from Wolbachia pipientis wMel.